A 347-amino-acid polypeptide reads, in one-letter code: Anthranilate phosphoribosyltransferase (347 aa).

Residues G88, 91–92 (GD), T96, 98–101 (NIST), 116–124 (KHGNRSVSS), and S128 contribute to the 5-phospho-alpha-D-ribose 1-diphosphate site. Anthranilate is bound at residue G88. S100 serves as a coordination point for Mg(2+). N119 lines the anthranilate pocket. R174 is a binding site for anthranilate. Residues D232 and E233 each coordinate Mg(2+).

The protein belongs to the anthranilate phosphoribosyltransferase family. Homodimer. It depends on Mg(2+) as a cofactor.

The enzyme catalyses N-(5-phospho-beta-D-ribosyl)anthranilate + diphosphate = 5-phospho-alpha-D-ribose 1-diphosphate + anthranilate. It functions in the pathway amino-acid biosynthesis; L-tryptophan biosynthesis; L-tryptophan from chorismate: step 2/5. Functionally, catalyzes the transfer of the phosphoribosyl group of 5-phosphorylribose-1-pyrophosphate (PRPP) to anthranilate to yield N-(5'-phosphoribosyl)-anthranilate (PRA). The chain is Anthranilate phosphoribosyltransferase from Shewanella sp. (strain ANA-3).